A 98-amino-acid polypeptide reads, in one-letter code: Large ribosomal subunit protein uL23 (98 aa).

The protein belongs to the universal ribosomal protein uL23 family. Part of the 50S ribosomal subunit. Contacts protein L29, and trigger factor when it is bound to the ribosome.

One of the early assembly proteins it binds 23S rRNA. One of the proteins that surrounds the polypeptide exit tunnel on the outside of the ribosome. Forms the main docking site for trigger factor binding to the ribosome. This Streptococcus pyogenes serotype M1 protein is Large ribosomal subunit protein uL23.